A 248-amino-acid polypeptide reads, in one-letter code: Lysine-rich arabinogalactan protein 19 (248 aa).

Residues 1–24 (MESNSIIWSLLLASALISSFSVNA) form the signal peptide. Over residues 25-37 (QGPAASPVTSTTT) the composition is skewed to low complexity. Positions 25–221 (QGPAASPVTS…APSPNTNGGN (197 aa)) are disordered. Composition is skewed to pro residues over residues 38–57 (APPP…PTTT), 67–86 (PASP…PAPK), and 94–171 (ATPP…PAPA). The span at 173–187 (TKHKRKHKHKRHHHA) shows a compositional bias: basic residues. Pro residues predominate over residues 189-203 (APAPIPPSPPSPPVL). Residue S196 is the site of GPI-anchor amidated serine attachment. Positions 197–248 (PPSPPVLTDPQDTAPAPSPNTNGGNALNQLKGRAVMWLNTGLVILFLLAMTA) are cleaved as a propeptide — removed in mature form.

Belongs to the lysine-rich AGP family. O-glycosylated on the hydroxyproline residues. Strongly expressed in stems, moderately expressed in flowers and roots and weakly expressed in young leaves.

The protein localises to the cell membrane. Proteoglycan that seems to be implicated in diverse developmental roles such as differentiation, cell-cell recognition, embryogenesis and programmed cell death. The polypeptide is Lysine-rich arabinogalactan protein 19 (AGP19) (Arabidopsis thaliana (Mouse-ear cress)).